The sequence spans 114 residues: Large ribosomal subunit protein uL22 (114 aa).

The protein belongs to the universal ribosomal protein uL22 family. Part of the 50S ribosomal subunit.

Functionally, this protein binds specifically to 23S rRNA; its binding is stimulated by other ribosomal proteins, e.g. L4, L17, and L20. It is important during the early stages of 50S assembly. It makes multiple contacts with different domains of the 23S rRNA in the assembled 50S subunit and ribosome. Its function is as follows. The globular domain of the protein is located near the polypeptide exit tunnel on the outside of the subunit, while an extended beta-hairpin is found that lines the wall of the exit tunnel in the center of the 70S ribosome. The chain is Large ribosomal subunit protein uL22 from Aeromonas salmonicida (strain A449).